Consider the following 366-residue polypeptide: NADH-quinone oxidoreductase subunit D (366 aa).

Belongs to the complex I 49 kDa subunit family. In terms of assembly, NDH-1 is composed of 14 different subunits. Subunits NuoB, C, D, E, F, and G constitute the peripheral sector of the complex.

The protein resides in the cell membrane. It catalyses the reaction a quinone + NADH + 5 H(+)(in) = a quinol + NAD(+) + 4 H(+)(out). Functionally, NDH-1 shuttles electrons from NADH, via FMN and iron-sulfur (Fe-S) centers, to quinones in the respiratory chain. The immediate electron acceptor for the enzyme in this species is believed to be a menaquinone. Couples the redox reaction to proton translocation (for every two electrons transferred, four hydrogen ions are translocated across the cytoplasmic membrane), and thus conserves the redox energy in a proton gradient. In Bacillus cereus (strain ATCC 10987 / NRS 248), this protein is NADH-quinone oxidoreductase subunit D.